Here is a 232-residue protein sequence, read N- to C-terminus: Small heat shock protein, chloroplastic (232 aa).

Positions 1–25 (MAQSVSLSTIASPILSQKPGSSVKS) are enriched in polar residues. 2 disordered regions span residues 1–35 (MAQS…SFPL) and 48–81 (RAQA…RKPR). The N-terminal 46 residues, 1 to 46 (MAQSVSLSTIASPILSQKPGSSVKSTPPCMASFPLRRQLPRLGLRN), are a transit peptide targeting the chloroplast. Positions 55-78 (GDNKDNSVEVHRVNKDDQGTAVER) are enriched in basic and acidic residues. The 109-residue stretch at 124–232 (IGGGEIRVPW…ERTVIDVQIQ (109 aa)) folds into the sHSP domain.

Belongs to the small heat shock protein (HSP20) family.

The protein localises to the plastid. It localises to the chloroplast. The sequence is that of Small heat shock protein, chloroplastic (HSP21) from Pisum sativum (Garden pea).